We begin with the raw amino-acid sequence, 208 residues long: MGEPAFTSFPSPPVLGKLKRNMMPWALQKKREIHMAKAHRRRAARSALPMRLTSCIFRRPVTRIRSHPDNQVRRRKGDEHLEKPQQLCAYRRLQALQPCSSQGEGSSPLHLESVLSILAPGTAGESLDRAGAERVRIPLEPTPGRFPAVAGGPTPGMGCQLPPPLSGQLVTPADIRRQARRVKKARERLAKALQADRLARQAEMLTGG.

This sequence belongs to the MBD3L family.

The protein is Methyl-CpG-binding domain protein 3-like 5 (MBD3L5) of Homo sapiens (Human).